The sequence spans 144 residues: D-aminoacyl-tRNA deacylase (144 aa).

The Gly-cisPro motif, important for rejection of L-amino acids signature appears at 136–137; that stretch reads GP.

This sequence belongs to the DTD family. As to quaternary structure, homodimer.

It is found in the cytoplasm. The catalysed reaction is glycyl-tRNA(Ala) + H2O = tRNA(Ala) + glycine + H(+). The enzyme catalyses a D-aminoacyl-tRNA + H2O = a tRNA + a D-alpha-amino acid + H(+). Its function is as follows. An aminoacyl-tRNA editing enzyme that deacylates mischarged D-aminoacyl-tRNAs. Also deacylates mischarged glycyl-tRNA(Ala), protecting cells against glycine mischarging by AlaRS. Acts via tRNA-based rather than protein-based catalysis; rejects L-amino acids rather than detecting D-amino acids in the active site. By recycling D-aminoacyl-tRNA to D-amino acids and free tRNA molecules, this enzyme counteracts the toxicity associated with the formation of D-aminoacyl-tRNA entities in vivo and helps enforce protein L-homochirality. The polypeptide is D-aminoacyl-tRNA deacylase (Haemophilus influenzae (strain PittEE)).